The following is a 102-amino-acid chain: RNA-binding protein Hfq (102 aa).

Residues 9–68 enclose the Sm domain; that stretch reads DPFLNALRRERVPVSIYLVNGIKLQGQIESFDQFVILLKNTVSQMVYKHAISTVVPSRPV. The disordered stretch occupies residues 63–102; sequence VPSRPVSHHSNNAGGGTSSNYHHGSSAQGTSAQQDSEETE. Over residues 70 to 96 the composition is skewed to polar residues; the sequence is HHSNNAGGGTSSNYHHGSSAQGTSAQQ.

It belongs to the Hfq family. In terms of assembly, homohexamer.

Functionally, RNA chaperone that binds small regulatory RNA (sRNAs) and mRNAs to facilitate mRNA translational regulation in response to envelope stress, environmental stress and changes in metabolite concentrations. Also binds with high specificity to tRNAs. In Citrobacter koseri (strain ATCC BAA-895 / CDC 4225-83 / SGSC4696), this protein is RNA-binding protein Hfq.